A 201-amino-acid chain; its full sequence is MAKRVTGPEIEKLIQLLAKVPGLGPRSARRAALHLIKKREQLMGPLALAMGEAHAKVKICSCCGNVDTIDPCTVCTDERRDQSMIIVVEDVSDLWALERAGAMNVAYHVLGGTLSPLDGVGPDDLNIKGLIDRVAKGGVREIIIAVNATVEGQTTAHYITDHLAGLGVKTTRLAHGVPVGGELDYLDEGTLSAALRARTLI.

Residues 60 to 75 (CSCCGNVDTIDPCTVC) form a C4-type zinc finger. The Toprim domain occupies 83–178 (SMIIVVEDVS…KTTRLAHGVP (96 aa)).

Belongs to the RecR family.

May play a role in DNA repair. It seems to be involved in an RecBC-independent recombinational process of DNA repair. It may act with RecF and RecO. In Allorhizobium ampelinum (strain ATCC BAA-846 / DSM 112012 / S4) (Agrobacterium vitis (strain S4)), this protein is Recombination protein RecR.